A 456-amino-acid polypeptide reads, in one-letter code: 26S proteasome non-ATPase regulatory subunit 12 (456 aa).

At Ala-2 the chain carries N-acetylalanine. Lys-92 participates in a covalent cross-link: Glycyl lysine isopeptide (Lys-Gly) (interchain with G-Cter in SUMO1); alternate. Residue Lys-92 forms a Glycyl lysine isopeptide (Lys-Gly) (interchain with G-Cter in SUMO2); alternate linkage. An N6-acetyllysine mark is found at Lys-221 and Lys-368. Positions 242-420 (SICKHYRAIY…GIINFQRPKD (179 aa)) constitute a PCI domain.

Belongs to the proteasome subunit p55 family. As to quaternary structure, component of the 19S proteasome regulatory particle complex. The 26S proteasome consists of a 20S core particle (CP) and two 19S regulatory subunits (RP). The regulatory particle is made of a lid composed of 9 subunits including PSMD12, a base containing 6 ATPases and few additional components. Interacts with ERCC6.

Functionally, component of the 26S proteasome, a multiprotein complex involved in the ATP-dependent degradation of ubiquitinated proteins. This complex plays a key role in the maintenance of protein homeostasis by removing misfolded or damaged proteins, which could impair cellular functions, and by removing proteins whose functions are no longer required. Therefore, the proteasome participates in numerous cellular processes, including cell cycle progression, apoptosis, or DNA damage repair. The chain is 26S proteasome non-ATPase regulatory subunit 12 (PSMD12) from Pongo abelii (Sumatran orangutan).